We begin with the raw amino-acid sequence, 375 residues long: Chaperone protein DnaJ (375 aa).

The J domain maps to 5–70; it reads DYYEVLGVER…GKRSAYDQYG (66 aa). The CR-type zinc-finger motif lies at 134–212; that stretch reads GTTVTIRVPT…CHGQGRVEES (79 aa). The Zn(2+) site is built by C147, C150, C164, C167, C186, C189, C200, and C203. CXXCXGXG motif repeat units follow at residues 147–154, 164–171, 186–193, and 200–207; these read CKTCDGTG, CTTCGGIG, CPRCHGSG, and CGSCHGQG.

The protein belongs to the DnaJ family. Homodimer. Zn(2+) serves as cofactor.

It is found in the cytoplasm. Functionally, participates actively in the response to hyperosmotic and heat shock by preventing the aggregation of stress-denatured proteins and by disaggregating proteins, also in an autonomous, DnaK-independent fashion. Unfolded proteins bind initially to DnaJ; upon interaction with the DnaJ-bound protein, DnaK hydrolyzes its bound ATP, resulting in the formation of a stable complex. GrpE releases ADP from DnaK; ATP binding to DnaK triggers the release of the substrate protein, thus completing the reaction cycle. Several rounds of ATP-dependent interactions between DnaJ, DnaK and GrpE are required for fully efficient folding. Also involved, together with DnaK and GrpE, in the DNA replication of plasmids through activation of initiation proteins. In Ectopseudomonas mendocina (strain ymp) (Pseudomonas mendocina), this protein is Chaperone protein DnaJ.